Here is a 157-residue protein sequence, read N- to C-terminus: Ribosome maturation factor RimP (157 aa).

Belongs to the RimP family.

Its subcellular location is the cytoplasm. Required for maturation of 30S ribosomal subunits. This is Ribosome maturation factor RimP from Limosilactobacillus reuteri (strain DSM 20016) (Lactobacillus reuteri).